A 430-amino-acid polypeptide reads, in one-letter code: DD-carboxypeptidase/endopeptidase Mpg (430 aa).

His295, Asp299, and His375 together coordinate Zn(2+).

This sequence belongs to the peptidase M23B family. As to quaternary structure, monomer. Requires Zn(2+) as cofactor. Likely to be synthesized as a proenzyme. The cleavage of the N-terminal domain is probably required for the activation of the enzyme.

It localises to the cell outer membrane. With respect to regulation, peptidoglycan (PG) degradation activity is completely inhibited by zinc chelating EDTA and phenanthroline. Functionally, has both endopeptidase and DD-carboxypeptidase activities. Degrades cell wall peptidoglycan (PG) to allow consummate expression of pili. Degrades N.gonorrhoeae and E.coli PG side chains in vitro. Required for proper piliation, which in turn is required for normal colony morphology, resistance to H(2)O(2) damage and defense against killing by human polymorphonuclear leukocytes (PMNs). Involved in type IV pilus biogenesis. Involved in resistance against non-oxidative killing by adherent CXCL8/IL8-primed human PMNs. Protects from killing by PMN-produced antimicrobial factors, which kill by a mechanism completely independent of reactive oxygen species (ROS) production of the PMNs. Provides protection against oxidative damage caused by peroxides H(2)O(2) and cumene hydroperoxide in vitro. In Neisseria gonorrhoeae (strain ATCC 700825 / FA 1090), this protein is DD-carboxypeptidase/endopeptidase Mpg.